The chain runs to 214 residues: MGAAHSASEEVRELEGKTGFSSDQIEQLHRRFKQLSGDQPTIRKENFNNVPDLELNPIRSKIVRAFFDNRNLRKGPSGLADEINFEDFLTIMSYFRPIDTTMDEEQVELSRKEKLRFLFHMYDSDSDGRITLEEYRNVVEELLSGNPHIEKESARSIADGAMMEAASVCMGQMEPDQVYEGITFEDFLKIWQGIDIETKMHVRFLNMETMALCH.

Residues 1 to 20 (MGAAHSASEEVRELEGKTGF) form a disordered region. Glycine 2 is lipidated: N-myristoyl glycine. The segment covering 7–16 (ASEEVRELEG) has biased composition (basic and acidic residues). The region spanning 110-145 (SRKEKLRFLFHMYDSDSDGRITLEEYRNVVEELLSG) is the EF-hand domain. Ca(2+) contacts are provided by aspartate 123, aspartate 125, aspartate 127, arginine 129, and glutamate 134.

It belongs to the calcineurin regulatory subunit family. CHP subfamily. As to quaternary structure, monomer. Homodimer; disulfide-linked. Interacts with SLC9A1/NHE1; the interaction enables an optimal Na(+)/H(+) exchange activity. Expressed in mature megakaryocytes and polymorphonuclear granulocytes (at protein level). Abundantly expressed in heart. Also expressed at a lower level in adult testis and salivary gland, and in the placenta.

It localises to the nucleus. Its subcellular location is the cytoplasm. The protein localises to the membrane. It is found in the cell membrane. The protein resides in the cell projection. It localises to the lamellipodium. Its subcellular location is the ruffle membrane. Functions as an integral cofactor in cell pH regulation by controlling plasma membrane-type Na(+)/H(+) exchange activity. Promotes the maturation, transport, cell surface stability and exchange activity of SLC9A1/NHE1 at the plasma membrane. Promotes the induction of hematopoietic stem cell differentiation toward megakaryocytic lineage. Essential for the coupling of ERK cascade activation with the expression of ETS family genes in megakaryocytic differentiation. Also involved in granulocytic differentiation in a ERK-dependent manner. Inhibits the phosphatase activity of calcineurin. The chain is Calcineurin B homologous protein 3 (TESC) from Homo sapiens (Human).